Reading from the N-terminus, the 280-residue chain is Ribosomal protein L11 methyltransferase (280 aa).

S-adenosyl-L-methionine is bound by residues T131, G152, D174, and N217.

Belongs to the methyltransferase superfamily. PrmA family.

It localises to the cytoplasm. It catalyses the reaction L-lysyl-[protein] + 3 S-adenosyl-L-methionine = N(6),N(6),N(6)-trimethyl-L-lysyl-[protein] + 3 S-adenosyl-L-homocysteine + 3 H(+). In terms of biological role, methylates ribosomal protein L11. This chain is Ribosomal protein L11 methyltransferase, found in Bacteroides fragilis (strain ATCC 25285 / DSM 2151 / CCUG 4856 / JCM 11019 / LMG 10263 / NCTC 9343 / Onslow / VPI 2553 / EN-2).